Consider the following 27-residue polypeptide: Histone H1.3, embryonic (27 aa).

An H15 domain is found at H1–N27.

This sequence belongs to the histone H1/H5 family.

It is found in the nucleus. It localises to the chromosome. Functionally, histones H1 are necessary for the condensation of nucleosome chains into higher-order structures. The polypeptide is Histone H1.3, embryonic (Parechinus angulosus (Angulate sea urchin)).